The following is a 381-amino-acid chain: Trans-enoyl reductase iliB (381 aa).

An NADP(+)-binding site is contributed by 50–53; sequence VDGK. Residue 145-152 coordinates substrate; the sequence is ATLATVGL. NADP(+) contacts are provided by residues 213–216, Tyr231, and 278–279; these read SPGS and LD. Position 298–302 (298–302) interacts with substrate; sequence TYTQF. 367–368 provides a ligand contact to NADP(+); that stretch reads IS.

The protein belongs to the zinc-containing alcohol dehydrogenase family. As to quaternary structure, monomer.

The catalysed reaction is N-[(4E,6E,10S,12Z,14E)-6,10-dimethyl-3-oxohexadeca-4,6,12,14-tetraenoyl]-L-tyrosyl-[ACP] = (3E,5S)-3-[(2E,4E,8S,10E,12Z)-1-hydroxy-4,8-dimethyltetradeca-2,4,10,12-tetraen-1-ylidene]-5-[(4-hydroxyphenyl)methyl]pyrrolidine-2,4-dione + holo-[ACP] + H(+). It participates in mycotoxin biosynthesis. Its function is as follows. Trans-enoyl reductase; part of the gene cluster that mediates the biosynthesis of ilicicolin H, a 4-hydroxy-2-pyridonealkaloid that has potent and broad antifungal activities by inhibiting the mitochondrial respiration chain. IliB collaborates with the hybrid PKS-NRPS synthetase iliA to assemble the backbone of ilicicolin H. The PKS portion of iliA and trans-acting enoyl reductase iliB work together to construct an octaketide, and two methyl groups are introduced by the MT domain of iliA during the chain assembly. The nascent chain is then condensed with tyrosine, catalyzed by the iliA C domain, and the resulting PKS-NRPS hybrid is offloaded by the iliA RED domain to form an advanced tetramic acid intermediate. The biosynthesis of ilicicolin H starts with formation of the tetramic acid by the hybrid PKS-NRPS synthetase iliA with the partnering trans-enoyl reductase iliB since iliA lacks a designated enoylreductase (ER) domain. The cytochrome P450 monooxygenase iliC then catalyzes the ring expansion of the tetramate to the acyclic 2-pyridone. The pericyclase iliD further converts the acyclic 2-pyridone into 8-epi-ilicicolin H. 8-epi-ilicicolin H might then spontaneously convert to ilicicolin H since ilicicolin H is produced in the absence of the epimerase iliE, in contrast to what was observed for the Talaromyces variabilis ilicolin H biosynthetic pathway. The chain is Trans-enoyl reductase iliB from Neonectria sp. (strain DH2).